A 126-amino-acid chain; its full sequence is Holo-[acyl-carrier-protein] synthase (126 aa).

Residues Asp8 and Glu57 each coordinate Mg(2+).

Belongs to the P-Pant transferase superfamily. AcpS family. It depends on Mg(2+) as a cofactor.

The protein localises to the cytoplasm. The catalysed reaction is apo-[ACP] + CoA = holo-[ACP] + adenosine 3',5'-bisphosphate + H(+). Transfers the 4'-phosphopantetheine moiety from coenzyme A to a Ser of acyl-carrier-protein. The sequence is that of Holo-[acyl-carrier-protein] synthase from Geobacter sulfurreducens (strain ATCC 51573 / DSM 12127 / PCA).